We begin with the raw amino-acid sequence, 302 residues long: 2-phosphoglycerate kinase (302 aa).

The ATP-cone domain occupies I2–I89.

The protein belongs to the 2-phosphoglycerate kinase family. Requires a divalent metal cation as cofactor.

The catalysed reaction is (2R)-2-phosphoglycerate + ATP = (2R)-2,3-bisphosphoglycerate + ADP + H(+). It participates in thermoadapter biosynthesis; cyclic 2,3-diphosphoglycerate biosynthesis; cyclic 2,3-diphosphoglycerate from 2-phospho-D-glycerate: step 1/2. Functionally, catalyzes the phosphorylation of 2-phosphoglycerate to 2,3-diphosphoglycerate. Involved in the biosynthesis of cyclic 2,3-bisphosphoglycerate, a thermoprotectant. This Pyrococcus furiosus (strain ATCC 43587 / DSM 3638 / JCM 8422 / Vc1) protein is 2-phosphoglycerate kinase.